A 468-amino-acid chain; its full sequence is MTIQIYNTLTRQKEIFKPLEEGKVKMYVCGPTVYNYIHIGNARPAIVFDTVRRYLEYRGFDVDYVLNFTDVDDKIIKTAKDVGEEVPVLADRFVNAYLEDVGALGVKKATKNPRVMDTMDDIIAFISALIEKGYAYEADGDVYFKPRSFDTYGKLSHQSIDELRSGARIQVGEKKEDPLDFALWKQAKDDEIAWKSPWGEGRPGWHIECSAMVKKHLGDTIDIHAGGQDLTFPHHENEIAQSEAMNGETFANYWMHNGYINIDNEKMSKSLGNFVLARDLIQAHDPRVLRFFMLSVHYRNPINFTEALLESAKTSLERIQTAYHNLSHRRDSSLNLTNDDAKWLQLVSAAMSKFEQDMDDDFNTANAISVLFDLSKEANVYLQENQTSTEVIDAFQDAISQILTVLGINILEDEETLLDETIEALIKERNEARKNRNFARADEIRDMLKEKGIVLEDTPQGVRWKRGK.

Cys-29 contributes to the Zn(2+) binding site. The 'HIGH' region motif lies at 31–41; that stretch reads PTVYNYIHIGN. Positions 209, 234, and 238 each coordinate Zn(2+). The 'KMSKS' region signature appears at 266–270; sequence KMSKS. Lys-269 provides a ligand contact to ATP. Position 270 is a phosphoserine (Ser-270).

The protein belongs to the class-I aminoacyl-tRNA synthetase family. In terms of assembly, monomer. Requires Zn(2+) as cofactor.

The protein resides in the cytoplasm. The enzyme catalyses tRNA(Cys) + L-cysteine + ATP = L-cysteinyl-tRNA(Cys) + AMP + diphosphate. The chain is Cysteine--tRNA ligase from Oceanobacillus iheyensis (strain DSM 14371 / CIP 107618 / JCM 11309 / KCTC 3954 / HTE831).